The following is a 465-amino-acid chain: Lipase 10 (465 aa).

The first 16 residues, Met-1 to Ala-16, serve as a signal peptide directing secretion. An intrachain disulfide couples Cys-112 to Cys-285. Ser-196 (charge relay system) is an active-site residue. N-linked (GlcNAc...) asparagine glycans are attached at residues Asn-231 and Asn-319. Active-site charge relay system residues include Asp-348 and His-381. Cys-364 and Cys-409 are joined by a disulfide.

This sequence belongs to the AB hydrolase superfamily. Lipase family. Class Lip subfamily.

It localises to the secreted. The catalysed reaction is a triacylglycerol + H2O = a diacylglycerol + a fatty acid + H(+). In terms of biological role, secreted lipase that is able to hydrolyze both the neutral triacylglycerols and the monopalmitate ester Tween 40, allowing the use of hydrolyzed products as carbon sources. Has broad lipolytic activity, which may be important for colonization and subsequent infection, therefore contributing to the persistence and virulence in human tissue. This Candida albicans (strain SC5314 / ATCC MYA-2876) (Yeast) protein is Lipase 10.